The chain runs to 506 residues: GPI mannosyltransferase 3 (506 aa).

N-linked (GlcNAc...) asparagine glycosylation occurs at asparagine 115. 6 helical membrane-spanning segments follow: residues 180 to 200 (AFACFIRPTNILVWIFPLLFW), 229 to 249 (YGRLFGIFVLCVSLFLVNIIA), 257 to 277 (FVFPIISFFQFNVTSGLSSLY), 285 to 305 (YLSQALPLICGGFLPFVLLTM), 330 to 350 (FVYPISPILLTLAGKFFSSFS), and 358 to 378 (FFFLIGLGHALVITFLCRFHQ). The N-linked (GlcNAc...) asparagine glycan is linked to asparagine 395.

It belongs to the glycosyltransferase 22 family. PIGB subfamily.

It is found in the endoplasmic reticulum membrane. It participates in glycolipid biosynthesis; glycosylphosphatidylinositol-anchor biosynthesis. Functionally, mannosyltransferase involved in glycosylphosphatidylinositol-anchor biosynthesis. Transfers the third mannose to Man2-GlcN-acyl-PI during GPI precursor assembly. This chain is GPI mannosyltransferase 3 (gpi10), found in Schizosaccharomyces pombe (strain 972 / ATCC 24843) (Fission yeast).